Here is a 565-residue protein sequence, read N- to C-terminus: DNA primase (565 aa).

A CHC2-type zinc finger spans residues 37 to 61 (CPFHSETNPSFYVHPGLKIYHCFGC). The 82-residue stretch at 248-329 (GFFVITEGYF…NVLVATPSPY (82 aa)) folds into the Toprim domain. Mg(2+) contacts are provided by Glu254, Asp298, and Asp300.

The protein belongs to the DnaG primase family. Monomer. Interacts with DnaB. Zn(2+) serves as cofactor. Requires Mg(2+) as cofactor.

It carries out the reaction ssDNA + n NTP = ssDNA/pppN(pN)n-1 hybrid + (n-1) diphosphate.. Its function is as follows. RNA polymerase that catalyzes the synthesis of short RNA molecules used as primers for DNA polymerase during DNA replication. The chain is DNA primase from Thermotoga maritima (strain ATCC 43589 / DSM 3109 / JCM 10099 / NBRC 100826 / MSB8).